Consider the following 792-residue polypeptide: Lon protease (792 aa).

Positions 16-208 (LPILPLRETV…KVTYYLTREL (193 aa)) constitute a Lon N-terminal domain. An ATP-binding site is contributed by 360–367 (GPPGVGKT). A Lon proteolytic domain is found at 597 to 778 (KDEVGVATGL…DEVLNLALLE (182 aa)). Residues Ser684 and Lys727 contribute to the active site.

It belongs to the peptidase S16 family. In terms of assembly, homohexamer. Organized in a ring with a central cavity.

It localises to the cytoplasm. The enzyme catalyses Hydrolysis of proteins in presence of ATP.. Its function is as follows. ATP-dependent serine protease that mediates the selective degradation of mutant and abnormal proteins as well as certain short-lived regulatory proteins. Required for cellular homeostasis and for survival from DNA damage and developmental changes induced by stress. Degrades polypeptides processively to yield small peptide fragments that are 5 to 10 amino acids long. Binds to DNA in a double-stranded, site-specific manner. This chain is Lon protease, found in Dictyoglomus thermophilum (strain ATCC 35947 / DSM 3960 / H-6-12).